A 390-amino-acid chain; its full sequence is Dynein regulatory complex subunit 5 (390 aa).

LRR repeat units follow at residues 182-205 (TETLTHLDLSNNSLDDDKVRMLAS), 210-233 (NLSITHLNLSHNKIADRGVRALAK), and 238-261 (HSVISLLELHDNQIHTEGAESLAR).

Belongs to the DRC5 family. Component of the nexin-dynein regulatory complex (N-DRC). Interacts with DRC1, DRC2, DRC3, DRC4, DRC7 and DRC11.

It is found in the cell projection. It localises to the cilium. The protein localises to the flagellum. Its subcellular location is the cytoplasm. The protein resides in the cytoskeleton. It is found in the flagellum axoneme. In terms of biological role, component of the nexin-dynein regulatory complex (N-DRC) a key regulator of ciliary/flagellar motility which maintains the alignment and integrity of the distal axoneme and regulates microtubule sliding in motile axonemes. May play a role in the assembly of N-DRC. The sequence is that of Dynein regulatory complex subunit 5 from Chlamydomonas reinhardtii (Chlamydomonas smithii).